We begin with the raw amino-acid sequence, 632 residues long: Effector protein hopAD1 (632 aa).

A disordered region spans residues 13-34; the sequence is TAVDSSLPTSATSQTISNTKSR. Positions 15–32 are enriched in polar residues; the sequence is VDSSLPTSATSQTISNTK.

The protein localises to the secreted. The protein is Effector protein hopAD1 (hopAD1) of Pseudomonas syringae pv. tomato (strain ATCC BAA-871 / DC3000).